A 2155-amino-acid chain; its full sequence is Alpha-tectorin (2155 aa).

An N-terminal signal peptide occupies residues M1–A22. N34, N187, N215, N278, N455, N506, N528, and N560 each carry an N-linked (GlcNAc...) asparagine glycan. One can recognise an NIDO domain in the interval P98–K252. The VWFC domain occupies C260–C314. In terms of domain architecture, VWFD 1 spans S320 to D500. Disulfide bonds link C322–C461 and C344–C499. Residues C597–C650 form the TIL 1 domain. Residues N670, N687, N813, N843, N855, N898, N920, N931, and N949 are each glycosylated (N-linked (GlcNAc...) asparagine). The VWFD 2 domain maps to T711–N886. C713 and C849 are joined by a disulfide. The 53-residue stretch at C984–C1036 folds into the TIL 2 domain. Residues N1048, N1235, and N1364 are each glycosylated (N-linked (GlcNAc...) asparagine). One can recognise a VWFD 3 domain in the interval A1098–Q1278. Intrachain disulfides connect C1100/C1241 and C1122/C1277. Residues C1372 to C1425 enclose the TIL 3 domain. Positions S1485–N1666 constitute a VWFD 4 domain. Intrachain disulfides connect C1487–C1622, C1509–C1665, C1717–C1775, C1741–C1784, C1786–C1818, C1806–C1898, and C1837–C1857. N-linked (GlcNAc...) asparagine glycosylation is found at N1538, N1565, N1756, N1772, N1794, N1851, N1864, N1880, N1920, and N1939. The 255-residue stretch at T1805 to N2059 folds into the ZP domain. Intrachain disulfides connect C1980-C2040, C2001-C2056, and C2045-C2052. Residue N2091 is the site of GPI-anchor amidated asparagine attachment. A propeptide spans G2092 to S2155 (removed in mature form).

May form homomeric filament after self-association or heteromeric filament after association with beta-tectorin. Interacts with CEACAM16. In terms of processing, the presence of a hydrophobic C-terminus preceded by a potential cleavage site strongly suggests that tectorins are synthesized as glycosylphosphatidylinositol-linked, membrane-bound precursors. Tectorins are targeted to the apical surface of the inner ear epithelia by the lipid and proteolytically released into the extracellular compartment.

Its subcellular location is the cell membrane. The protein localises to the secreted. The protein resides in the extracellular space. It localises to the extracellular matrix. Functionally, one of the major non-collagenous components of the tectorial membrane. The tectorial membrane is an extracellular matrix of the inner ear that covers the neuroepithelium of the cochlea and contacts the stereocilia bundles of specialized sensory hair cells. Sound induces movement of these hair cells relative to the tectorial membrane, deflects the stereocilia and leads to fluctuations in hair-cell membrane potential, transducing sound into electrical signals. In Homo sapiens (Human), this protein is Alpha-tectorin (TECTA).